Here is a 734-residue protein sequence, read N- to C-terminus: Photosystem I P700 chlorophyll a apoprotein A2 (734 aa).

Helical transmembrane passes span 46-69 (IFAS…FHVA), 135-158 (LYAG…LHLQ), 175-199 (LNHH…HVAI), 273-291 (IAHH…GHMY), 330-353 (LHFQ…QHMY), 369-395 (SALY…IFFV), 417-439 (AIIS…IYVH), and 517-535 (FLIH…LILV). Residues Cys559 and Cys568 each contribute to the [4Fe-4S] cluster site. Transmembrane regions (helical) follow at residues 575-596 (AFYL…YWHW) and 643-665 (LSVW…MFLI). 3 residues coordinate chlorophyll a: His654, Met662, and Tyr670. Trp671 is a phylloquinone binding site. A helical membrane pass occupies residues 707-727 (LVGLIHFTAGYIFTYAAFVIA).

The protein belongs to the PsaA/PsaB family. As to quaternary structure, the PsaA/B heterodimer binds the P700 chlorophyll special pair and subsequent electron acceptors. PSI consists of a core antenna complex that captures photons, and an electron transfer chain that converts photonic excitation into a charge separation. The eukaryotic PSI reaction center is composed of at least 11 subunits. P700 is a chlorophyll a/chlorophyll a' dimer, A0 is one or more chlorophyll a, A1 is one or both phylloquinones and FX is a shared 4Fe-4S iron-sulfur center. is required as a cofactor.

It is found in the plastid. The protein resides in the chloroplast thylakoid membrane. It carries out the reaction reduced [plastocyanin] + hnu + oxidized [2Fe-2S]-[ferredoxin] = oxidized [plastocyanin] + reduced [2Fe-2S]-[ferredoxin]. PsaA and PsaB bind P700, the primary electron donor of photosystem I (PSI), as well as the electron acceptors A0, A1 and FX. PSI is a plastocyanin/cytochrome c6-ferredoxin oxidoreductase, converting photonic excitation into a charge separation, which transfers an electron from the donor P700 chlorophyll pair to the spectroscopically characterized acceptors A0, A1, FX, FA and FB in turn. Oxidized P700 is reduced on the lumenal side of the thylakoid membrane by plastocyanin or cytochrome c6. This chain is Photosystem I P700 chlorophyll a apoprotein A2, found in Rhodomonas salina (Cryptomonas salina).